The sequence spans 744 residues: Cell surface receptor daf-4 (744 aa).

An N-terminal signal peptide occupies residues 1–31 (MNQKGTVRLKALVLICLPLFLIATPVPVAVT). Over 48–253 (WANTLVSKVA…IALLILAYVG (206 aa)) the chain is Extracellular. N-linked (GlcNAc...) asparagine glycosylation is found at asparagine 60, asparagine 134, and asparagine 165. Residues 254–274 (WKFQQNKKEEIKKQQKIKFDM) traverse the membrane as a helical segment. At 275–744 (EKTDALEAGN…PSGTFGTFTT (470 aa)) the chain is on the cytoplasmic side. The region spanning 306–603 (ITDFQLISKG…FARVWNHIMS (298 aa)) is the Protein kinase domain. Residues 312–320 (ISKGRFGKV) and lysine 338 contribute to the ATP site. The active-site Proton acceptor is aspartate 440. Disordered stretches follow at residues 605–686 (PDSS…PEPE) and 724–744 (AGAD…TFTT). Residues 620–639 (RGVDDVEQSEKPEGIEEMQH) show a composition bias toward basic and acidic residues. The span at 731-744 (STPTPSGTFGTFTT) shows a compositional bias: low complexity.

This sequence belongs to the protein kinase superfamily. TKL Ser/Thr protein kinase family. TGFB receptor subfamily. In terms of assembly, may interact with daf-1 to regulate dauer larva development. Interacts with sma-10. Pharynx, intestine, hypodermis and body wall muscles in L1 through to adult stages. Also expressed in head neurons, ventral cord and tail neurons. Subset of head neurons show coexpression with daf-1 when dauer/nondauer decision is made.

The protein resides in the cell membrane. It carries out the reaction L-threonyl-[receptor-protein] + ATP = O-phospho-L-threonyl-[receptor-protein] + ADP + H(+). It catalyses the reaction L-seryl-[receptor-protein] + ATP = O-phospho-L-seryl-[receptor-protein] + ADP + H(+). In terms of biological role, involved in a TGF-beta pathway. May be a receptor for TGF-beta-like ligand daf-7. Controls the decision of whether or not larvae enter a developmentally arrested state, known as dauer, in response to environmental conditions. Regulates body size and male tail patterning. Involved in regulating entry into quiescence triggered by satiety. Involved in sensitivity to CO2 levels. The sequence is that of Cell surface receptor daf-4 from Caenorhabditis elegans.